The following is a 327-amino-acid chain: Probable cytosolic iron-sulfur protein assembly protein CIAO1 homolog (327 aa).

WD repeat units lie at residues 3-42, 48-87, 92-131, 137-176, 181-220, 239-278, and 290-327; these read GHED…WICK, GHQR…FECN, GHEN…EYEC, SHTQ…WSCC, GHES…NQEG, YHDR…DRNQ, and AHSM…PAEE.

Belongs to the WD repeat CIA1 family.

Functionally, essential component of the cytosolic iron-sulfur (Fe/S) protein assembly machinery. Required for the maturation of extramitochondrial Fe/S proteins. In Nematostella vectensis (Starlet sea anemone), this protein is Probable cytosolic iron-sulfur protein assembly protein CIAO1 homolog.